Consider the following 573-residue polypeptide: Sulfite reductase [NADPH] hemoprotein beta-component (573 aa).

The [4Fe-4S] cluster site is built by Cys438, Cys444, Cys483, and Cys487. Cys487 serves as a coordination point for siroheme.

Belongs to the nitrite and sulfite reductase 4Fe-4S domain family. Alpha(8)-beta(8). The alpha component is a flavoprotein, the beta component is a hemoprotein. Requires siroheme as cofactor. The cofactor is [4Fe-4S] cluster.

The catalysed reaction is hydrogen sulfide + 3 NADP(+) + 3 H2O = sulfite + 3 NADPH + 4 H(+). The protein operates within sulfur metabolism; hydrogen sulfide biosynthesis; hydrogen sulfide from sulfite (NADPH route): step 1/1. In terms of biological role, component of the sulfite reductase complex that catalyzes the 6-electron reduction of sulfite to sulfide. This is one of several activities required for the biosynthesis of L-cysteine from sulfate. This is Sulfite reductase [NADPH] hemoprotein beta-component from Geobacillus thermodenitrificans (strain NG80-2).